A 161-amino-acid chain; its full sequence is MAKFPITDQGFEKLEHELKHLKHVERKKVSEDIAEARAHGDLSENAEYEAAREKQAFVEARIKHLEDITARAEIINVAKLSGDSIKFGATVVLIDDETEEEVMYHIVGEYEADITKKRVSIASPIAKALIGKSVGDIVEVMTPGGVKSYEVVTIKYEELVF.

Residues 43 to 68 (SENAEYEAAREKQAFVEARIKHLEDI) adopt a coiled-coil conformation.

The protein belongs to the GreA/GreB family.

In terms of biological role, necessary for efficient RNA polymerase transcription elongation past template-encoded arresting sites. The arresting sites in DNA have the property of trapping a certain fraction of elongating RNA polymerases that pass through, resulting in locked ternary complexes. Cleavage of the nascent transcript by cleavage factors such as GreA or GreB allows the resumption of elongation from the new 3'terminus. GreA releases sequences of 2 to 3 nucleotides. This is Transcription elongation factor GreA from Rickettsia bellii (strain OSU 85-389).